A 91-amino-acid polypeptide reads, in one-letter code: DNA-directed RNA polymerase subunit omega (91 aa).

It belongs to the RNA polymerase subunit omega family. In terms of assembly, the RNAP catalytic core consists of 2 alpha, 1 beta, 1 beta' and 1 omega subunit. When a sigma factor is associated with the core the holoenzyme is formed, which can initiate transcription.

It catalyses the reaction RNA(n) + a ribonucleoside 5'-triphosphate = RNA(n+1) + diphosphate. Promotes RNA polymerase assembly. Latches the N- and C-terminal regions of the beta' subunit thereby facilitating its interaction with the beta and alpha subunits. The chain is DNA-directed RNA polymerase subunit omega from Pectobacterium atrosepticum (strain SCRI 1043 / ATCC BAA-672) (Erwinia carotovora subsp. atroseptica).